The sequence spans 111 residues: Flagellar hook-basal body complex protein FliE (111 aa).

It belongs to the FliE family.

The protein localises to the bacterial flagellum basal body. The polypeptide is Flagellar hook-basal body complex protein FliE (Sinorhizobium fredii (strain NBRC 101917 / NGR234)).